We begin with the raw amino-acid sequence, 339 residues long: Biotin synthase (339 aa).

In terms of domain architecture, Radical SAM core spans Asn-55 to Arg-282. Residues Cys-70, Cys-74, and Cys-77 each contribute to the [4Fe-4S] cluster site. Positions 114, 145, 205, and 277 each coordinate [2Fe-2S] cluster.

This sequence belongs to the radical SAM superfamily. Biotin synthase family. In terms of assembly, homodimer. It depends on [4Fe-4S] cluster as a cofactor. [2Fe-2S] cluster serves as cofactor.

It carries out the reaction (4R,5S)-dethiobiotin + (sulfur carrier)-SH + 2 reduced [2Fe-2S]-[ferredoxin] + 2 S-adenosyl-L-methionine = (sulfur carrier)-H + biotin + 2 5'-deoxyadenosine + 2 L-methionine + 2 oxidized [2Fe-2S]-[ferredoxin]. It functions in the pathway cofactor biosynthesis; biotin biosynthesis; biotin from 7,8-diaminononanoate: step 2/2. In terms of biological role, catalyzes the conversion of dethiobiotin (DTB) to biotin by the insertion of a sulfur atom into dethiobiotin via a radical-based mechanism. This Burkholderia vietnamiensis (strain G4 / LMG 22486) (Burkholderia cepacia (strain R1808)) protein is Biotin synthase.